Reading from the N-terminus, the 464-residue chain is Argininosuccinate lyase (464 aa).

Belongs to the lyase 1 family. Argininosuccinate lyase subfamily.

The protein resides in the cytoplasm. The catalysed reaction is 2-(N(omega)-L-arginino)succinate = fumarate + L-arginine. It participates in amino-acid biosynthesis; L-arginine biosynthesis; L-arginine from L-ornithine and carbamoyl phosphate: step 3/3. In Pseudomonas aeruginosa (strain ATCC 15692 / DSM 22644 / CIP 104116 / JCM 14847 / LMG 12228 / 1C / PRS 101 / PAO1), this protein is Argininosuccinate lyase.